Reading from the N-terminus, the 301-residue chain is ATP synthase gamma chain (301 aa).

The protein belongs to the ATPase gamma chain family. In terms of assembly, F-type ATPases have 2 components, CF(1) - the catalytic core - and CF(0) - the membrane proton channel. CF(1) has five subunits: alpha(3), beta(3), gamma(1), delta(1), epsilon(1). CF(0) has three main subunits: a, b and c.

The protein localises to the cell inner membrane. In terms of biological role, produces ATP from ADP in the presence of a proton gradient across the membrane. The gamma chain is believed to be important in regulating ATPase activity and the flow of protons through the CF(0) complex. The protein is ATP synthase gamma chain of Helicobacter pylori (strain G27).